An 83-amino-acid chain; its full sequence is Weak neurotoxin WNTX33 (83 aa).

The N-terminal stretch at 1–21 (MKTLLLTLVVVTIVCLDLGYS) is a signal peptide. 4 cysteine pairs are disulfide-bonded: cysteine 24–cysteine 45, cysteine 38–cysteine 62, cysteine 64–cysteine 75, and cysteine 76–cysteine 81.

This sequence belongs to the three-finger toxin family. Short-chain subfamily. Expressed by the venom gland.

Its subcellular location is the secreted. The protein is Weak neurotoxin WNTX33 of Ophiophagus hannah (King cobra).